The following is a 174-amino-acid chain: Peptide methionine sulfoxide reductase MsrA (174 aa).

Cys11 is an active-site residue.

It belongs to the MsrA Met sulfoxide reductase family.

The catalysed reaction is L-methionyl-[protein] + [thioredoxin]-disulfide + H2O = L-methionyl-(S)-S-oxide-[protein] + [thioredoxin]-dithiol. It catalyses the reaction [thioredoxin]-disulfide + L-methionine + H2O = L-methionine (S)-S-oxide + [thioredoxin]-dithiol. Has an important function as a repair enzyme for proteins that have been inactivated by oxidation. Catalyzes the reversible oxidation-reduction of methionine sulfoxide in proteins to methionine. This Pasteurella multocida (strain Pm70) protein is Peptide methionine sulfoxide reductase MsrA.